The primary structure comprises 218 residues: Small ribosomal subunit protein uS3c (218 aa).

The region spanning 47-118 is the KH type-2 domain; that stretch reads IRRHMRSSSN…KLNIAIVKVA (72 aa).

It belongs to the universal ribosomal protein uS3 family. In terms of assembly, part of the 30S ribosomal subunit.

It localises to the plastid. The protein resides in the chloroplast. The polypeptide is Small ribosomal subunit protein uS3c (rps3) (Cycas taitungensis (Prince sago)).